The primary structure comprises 670 residues: Tripeptidyl-peptidase SED1 (670 aa).

Positions 1–20 are cleaved as a signal peptide; it reads MSTMIFMYFIYIVLYASGIA. A propeptide spans 21–231 (removed in mature form); sequence ANLSYHVHEK…VGLLKNKILS (211 aa). Positions 241 to 669 constitute a Peptidase S53 domain; the sequence is LITPDCLRAL…DRMLDLFLQL (429 aa). Residues E318 and D322 each act as charge relay system in the active site. N334, N387, N488, N508, and N551 each carry an N-linked (GlcNAc...) asparagine glycan. The Charge relay system role is filled by S586. Ca(2+)-binding residues include D627, V628, G647, and D649.

Ca(2+) serves as cofactor.

Its subcellular location is the secreted. The protein resides in the extracellular space. The enzyme catalyses Release of an N-terminal tripeptide from a polypeptide.. Secreted tripeptidyl-peptidase which degrades proteins at acidic pHs and is involved in virulence. The sequence is that of Tripeptidyl-peptidase SED1 (SED1) from Arthroderma otae (strain ATCC MYA-4605 / CBS 113480) (Microsporum canis).